Consider the following 169-residue polypeptide: Putative tRNA (cytidine(34)-2'-O)-methyltransferase (169 aa).

S-adenosyl-L-methionine is bound by residues Ile-79, Gly-104, Ile-125, and Ser-133.

Belongs to the class IV-like SAM-binding methyltransferase superfamily. RNA methyltransferase TrmH family. TrmL subfamily.

The protein resides in the cytoplasm. The catalysed reaction is cytidine(34) in tRNA + S-adenosyl-L-methionine = 2'-O-methylcytidine(34) in tRNA + S-adenosyl-L-homocysteine + H(+). The enzyme catalyses 5-carboxymethylaminomethyluridine(34) in tRNA(Leu) + S-adenosyl-L-methionine = 5-carboxymethylaminomethyl-2'-O-methyluridine(34) in tRNA(Leu) + S-adenosyl-L-homocysteine + H(+). Functionally, could methylate the ribose at the nucleotide 34 wobble position in tRNA. This is Putative tRNA (cytidine(34)-2'-O)-methyltransferase from Listeria monocytogenes serotype 4b (strain F2365).